Reading from the N-terminus, the 131-residue chain is Large ribosomal subunit protein bL19 (131 aa).

The segment at 112-131 (KSARIAERAGGPKASASTEA) is disordered.

The protein belongs to the bacterial ribosomal protein bL19 family.

This protein is located at the 30S-50S ribosomal subunit interface and may play a role in the structure and function of the aminoacyl-tRNA binding site. This Caulobacter vibrioides (strain ATCC 19089 / CIP 103742 / CB 15) (Caulobacter crescentus) protein is Large ribosomal subunit protein bL19.